Reading from the N-terminus, the 328-residue chain is D-cysteine desulfhydrase (328 aa).

An N6-(pyridoxal phosphate)lysine modification is found at Lys51.

This sequence belongs to the ACC deaminase/D-cysteine desulfhydrase family. As to quaternary structure, homodimer. Pyridoxal 5'-phosphate is required as a cofactor.

It catalyses the reaction D-cysteine + H2O = hydrogen sulfide + pyruvate + NH4(+) + H(+). In terms of biological role, catalyzes the alpha,beta-elimination reaction of D-cysteine and of several D-cysteine derivatives. It could be a defense mechanism against D-cysteine. The polypeptide is D-cysteine desulfhydrase (Klebsiella pneumoniae subsp. pneumoniae (strain ATCC 700721 / MGH 78578)).